A 439-amino-acid chain; its full sequence is 3-phosphoshikimate 1-carboxyvinyltransferase (439 aa).

Residues Lys21, Ser22, and Arg26 each coordinate 3-phosphoshikimate. Residue Lys21 participates in phosphoenolpyruvate binding. Positions 94 and 122 each coordinate phosphoenolpyruvate. Residues Ser167, Gln169, Asp320, and Lys347 each coordinate 3-phosphoshikimate. A phosphoenolpyruvate-binding site is contributed by Gln169. Asp320 (proton acceptor) is an active-site residue. Positions 351 and 395 each coordinate phosphoenolpyruvate.

The protein belongs to the EPSP synthase family. In terms of assembly, monomer.

Its subcellular location is the cytoplasm. The enzyme catalyses 3-phosphoshikimate + phosphoenolpyruvate = 5-O-(1-carboxyvinyl)-3-phosphoshikimate + phosphate. It functions in the pathway metabolic intermediate biosynthesis; chorismate biosynthesis; chorismate from D-erythrose 4-phosphate and phosphoenolpyruvate: step 6/7. Catalyzes the transfer of the enolpyruvyl moiety of phosphoenolpyruvate (PEP) to the 5-hydroxyl of shikimate-3-phosphate (S3P) to produce enolpyruvyl shikimate-3-phosphate and inorganic phosphate. This Hyphomonas neptunium (strain ATCC 15444) protein is 3-phosphoshikimate 1-carboxyvinyltransferase.